A 674-amino-acid polypeptide reads, in one-letter code: Probable 3',5'-cyclic-AMP phosphodiesterase pde-4 (674 aa).

The segment at 1-82 (MPRRRGSSSS…TSSASSYHPP (82 aa)) is disordered. Residues 15 to 24 (GGSGGGGGFG) are compositionally biased toward gly residues. A compositionally biased stretch (low complexity) spans 39 to 62 (RTSSPSASSTSRTPPAALPPRTSA). Residues 66-78 (PGSNHKLTSSASS) are compositionally biased toward polar residues. Positions 328-660 (HVPEYGVNCA…EWYQSRIPEE (333 aa)) constitute a PDEase domain. H407 (proton donor) is an active-site residue. A divalent metal cation contacts are provided by H411, H447, D448, and D565.

Belongs to the cyclic nucleotide phosphodiesterase family. A divalent metal cation serves as cofactor. As to expression, expressed in dorsal D (DD) motor neurons and several other neurons at the L1 stage. Expression in DD neurons decreases gradually beginning in the late L1 stage. Highly expressed in adult ventral D (VD) motor neurons, but diminished in adult DD motor neurons.

The enzyme catalyses 3',5'-cyclic AMP + H2O = AMP + H(+). Its function is as follows. Hydrolyzes the second messenger 3',5'-cyclic AMP (cAMP), which is a key regulator of many important physiological processes. Antagonizes dorsal D (DD) motor neuron respecification by reducing levels of cAMP. The polypeptide is Probable 3',5'-cyclic-AMP phosphodiesterase pde-4 (pde-4) (Caenorhabditis elegans).